The primary structure comprises 303 residues: Acetaldehyde dehydrogenase 1 (303 aa).

Cys130 acts as the Acyl-thioester intermediate in catalysis. Residues 161-169 and Asn272 contribute to the NAD(+) site; that span reads SVGPGTRKN.

It belongs to the acetaldehyde dehydrogenase family.

The catalysed reaction is acetaldehyde + NAD(+) + CoA = acetyl-CoA + NADH + H(+). This is Acetaldehyde dehydrogenase 1 from Cupriavidus metallidurans (strain ATCC 43123 / DSM 2839 / NBRC 102507 / CH34) (Ralstonia metallidurans).